A 574-amino-acid chain; its full sequence is Membralin (574 aa).

The segment at 1–27 is disordered; the sequence is MSEHAAAPGPGPNGGGGGGAAPVRGPR. The residue at position 2 (Ser-2) is an N-acetylserine. Residues 69-89 traverse the membrane as a helical segment; it reads FFVLLKALFVLFVLAYIHIVF. Asn-180 carries an N-linked (GlcNAc...) asparagine glycan. Helical transmembrane passes span 293-313, 337-357, and 417-437; these read TSYL…SMLL, IAFP…MEAI, and YSSL…IYFF. 2 stretches are compositionally biased toward low complexity: residues 461–470 and 491–501; these read LGPGTPTALP and LGPSSSPAPTG. 2 disordered regions span residues 461-515 and 546-574; these read LGPG…GASV and RRPT…PAGS.

This sequence belongs to the membralin family. Interacts with ERLIN2. As to expression, detected in brain, spinal cord, lung, liver and kidney.

The protein localises to the endoplasmic reticulum membrane. Its function is as follows. May have a role in the ERAD pathway required for clearance of misfolded proteins in the endoplasmic reticulum (ER). Promotes survival of motor neurons, probably by protecting against ER stress. The chain is Membralin (Tmem259) from Mus musculus (Mouse).